The chain runs to 1436 residues: DNA polymerase III PolC-type (1436 aa).

One can recognise an Exonuclease domain in the interval 420–576; that stretch reads YVVFDVETTG…YDTEATAYIF (157 aa).

This sequence belongs to the DNA polymerase type-C family. PolC subfamily.

It localises to the cytoplasm. The enzyme catalyses DNA(n) + a 2'-deoxyribonucleoside 5'-triphosphate = DNA(n+1) + diphosphate. In terms of biological role, required for replicative DNA synthesis. This DNA polymerase also exhibits 3' to 5' exonuclease activity. The protein is DNA polymerase III PolC-type of Staphylococcus aureus (strain MW2).